The sequence spans 584 residues: tRNA-guanine(15) transglycosylase (584 aa).

The active-site Nucleophile is the D95. Substrate is bound by residues D130 and G196. Residues C279, C281, and C284 each coordinate Zn(2+). One can recognise a PUA domain in the interval 507-582; sequence RMRVVVSEEA…RAVKVRRGIS (76 aa).

Belongs to the archaeosine tRNA-ribosyltransferase family. It depends on Zn(2+) as a cofactor.

The catalysed reaction is guanosine(15) in tRNA + 7-cyano-7-deazaguanine = 7-cyano-7-carbaguanosine(15) in tRNA + guanine. The protein operates within tRNA modification; archaeosine-tRNA biosynthesis. In terms of biological role, exchanges the guanine residue with 7-cyano-7-deazaguanine (preQ0) at position 15 in the dihydrouridine loop (D-loop) of archaeal tRNAs. The chain is tRNA-guanine(15) transglycosylase from Pyrococcus abyssi (strain GE5 / Orsay).